Here is a 341-residue protein sequence, read N- to C-terminus: NADH-ubiquinone oxidoreductase chain 2 (341 aa).

Transmembrane regions (helical) follow at residues 8–28 (IFFI…SWLG), 61–81 (FLTQ…MMMF), 95–117 (LLIL…FPGV), 145–165 (LNIN…ALGG), 195–215 (LLWL…ILMF), 238–258 (FFMF…GFLP), 266–286 (LVEM…LITL), and 320–340 (ILTM…IYLI).

It belongs to the complex I subunit 2 family.

Its subcellular location is the mitochondrion inner membrane. The catalysed reaction is a ubiquinone + NADH + 5 H(+)(in) = a ubiquinol + NAD(+) + 4 H(+)(out). Functionally, core subunit of the mitochondrial membrane respiratory chain NADH dehydrogenase (Complex I) that is believed to belong to the minimal assembly required for catalysis. Complex I functions in the transfer of electrons from NADH to the respiratory chain. The immediate electron acceptor for the enzyme is believed to be ubiquinone. This is NADH-ubiquinone oxidoreductase chain 2 from Aedes aegypti (Yellowfever mosquito).